We begin with the raw amino-acid sequence, 581 residues long: Transcription activator GAGA (581 aa).

The 66-residue stretch at 34–99 folds into the BTB domain; sequence VDCTLAAGGR…VYRGEVSVDH (66 aa). Residues 201-397 form an interaction with E(bx) region; it reads VIQAFLPARK…SSGSGSGALS (197 aa). The residue at position 237 (threonine 237) is a Phosphothreonine. Disordered regions lie at residues 298–343 and 364–404; these read ITPA…EQPA and LRHF…SVPQ. The C2H2-type; degenerate zinc finger occupies 343–366; it reads ATCPICYAVIRQSRNLRRHLELRH. A compositionally biased stretch (low complexity) spans 381 to 401; sequence GKKSSSGSSGSGSGALSSSGS.

Interacts with Bin1, lolal, corto, ttk and ph-p. Interacts with FACT subunits Ssrp and dre4/SPT16. Interacts with E(bx). Upon ecdysone stimulation, interacts with Nup98. The N-terminus is blocked. In terms of tissue distribution, expressed in the central nervous system throughout development.

The protein localises to the nucleus. It is found in the chromosome. In terms of biological role, transcriptional activator that functions by regulating chromatin structure. Overcomes the repressive effects of chromatin by promoting the open chromatin conformation in promoter gene regions, thereby allowing access to other transcription factors. Binds to DNA Polycomb response elements (PREs) at the bithorax complex and to the proximal region of the engrailed promoter, and positively regulates transcription of many genes including homeotic ones. Involved in zygotic genome activation (ZGA), a critical event in early embryonic development during which the developmental control passes from maternally provided mRNAs to the expression of the zygotic genome after fertilization. Binds to the DNA sequence (GA)n, with optimal binding to the pentamer 5'-GAGAG-3'. Binds DNA as an oligomer. May also act as a transcriptional repressor, maintaining the repressed state of genes including lolal, and down-regulating its own transcription. Required for dosage compensation in males and may be involved in oogenesis. Also has a role in nuclear division. The chain is Transcription activator GAGA (Trl) from Drosophila melanogaster (Fruit fly).